The following is a 209-amino-acid chain: Probable spore germination lipoprotein YlaJ (209 aa).

The signal sequence occupies residues 1-16; sequence MRILFIIIQLTLILSA. Cys-17 carries N-palmitoyl cysteine lipidation. The S-diacylglycerol cysteine moiety is linked to residue Cys-17. Disordered stretches follow at residues 26-54 and 165-209; these read QNVE…KDNG and NDVI…NNND. Composition is skewed to basic and acidic residues over residues 28–54 and 183–209; these read VEKE…KDNG and LNRK…NNND.

It is found in the forespore inner membrane. In terms of biological role, probably contributes, directly or indirectly, to early events in germination. This is Probable spore germination lipoprotein YlaJ (ylaJ) from Bacillus subtilis (strain 168).